A 509-amino-acid polypeptide reads, in one-letter code: MQNFKELGISDKTVQTLEAMGFKEPTPIQKDSIPYALEGDDILGQAQTGTGKTGAFGIPLIEKVVGQQGVQSLILAPTRELAMQVAEQLREFSKGQKVQVVTVFGGMPIERQIKVLKRGPQIVVGTPGRVIDHLNRRTLKTQGIHTLILDEADEMMNMGFIDDMRFIMDKIPAEQRQTMLFSATMPKAIQELVQQFMKAPKIIKTMNNEMSDPQIDEYYTIVKELEKFDTFTNFLDVHQPELAIVFGRTKRRVDELTSALLSKGYKAEGLHGDITQAKRLEVLKKFKNDQIDILVATDVAARGLDISGVSHVYNFDIPQDTESYTHRIGRTGRAGKEGIAVTFVNPIEMDYIRQIEDVNNRRMKALRPPHRKEVLKAREDDIKDRVQNWMSRENEPRLQRISSELLKEYDSTELVASLLQELVEANDEVEVQLTFEKPLARKNRSSKGGSRRSNHKRGNGKFDNKNRRSKGSKGQSSKKKNQKKFDRRDKQQKSGNQSLKGRTFADHQK.

Residues 2–30 (QNFKELGISDKTVQTLEAMGFKEPTPIQK) carry the Q motif motif. The Helicase ATP-binding domain occupies 33–203 (IPYALEGDDI…QQFMKAPKII (171 aa)). 46 to 53 (AQTGTGKT) provides a ligand contact to ATP. The DEAD box motif lies at 150-153 (DEAD). Residues 214–375 (QIDEYYTIVK…LRPPHRKEVL (162 aa)) form the Helicase C-terminal domain. 2 stretches are compositionally biased toward basic residues: residues 440 to 459 (ARKN…KRGN) and 467 to 482 (RRSK…KKNQ). Positions 440 to 509 (ARKNRSSKGG…KGRTFADHQK (70 aa)) are disordered. Residues 483–492 (KKFDRRDKQQ) are compositionally biased toward basic and acidic residues.

Belongs to the DEAD box helicase family. CshA subfamily. As to quaternary structure, oligomerizes, may be a member of the RNA degradosome.

It is found in the cytoplasm. The catalysed reaction is ATP + H2O = ADP + phosphate + H(+). In terms of biological role, DEAD-box RNA helicase possibly involved in RNA degradation. Unwinds dsRNA in both 5'- and 3'-directions, has RNA-dependent ATPase activity. This Staphylococcus epidermidis (strain ATCC 12228 / FDA PCI 1200) protein is DEAD-box ATP-dependent RNA helicase CshA.